A 234-amino-acid polypeptide reads, in one-letter code: Phosphoribosylaminoimidazole-succinocarboxamide synthase (234 aa).

This sequence belongs to the SAICAR synthetase family.

The enzyme catalyses 5-amino-1-(5-phospho-D-ribosyl)imidazole-4-carboxylate + L-aspartate + ATP = (2S)-2-[5-amino-1-(5-phospho-beta-D-ribosyl)imidazole-4-carboxamido]succinate + ADP + phosphate + 2 H(+). Its pathway is purine metabolism; IMP biosynthesis via de novo pathway; 5-amino-1-(5-phospho-D-ribosyl)imidazole-4-carboxamide from 5-amino-1-(5-phospho-D-ribosyl)imidazole-4-carboxylate: step 1/2. This is Phosphoribosylaminoimidazole-succinocarboxamide synthase from Staphylococcus aureus (strain COL).